Here is a 411-residue protein sequence, read N- to C-terminus: Bifunctional protein GlmU (411 aa).

A pyrophosphorylase region spans residues 1 to 204 (MDAVILCAGK…ENNIKGIKLN (204 aa)). UTP is bound by residues 6 to 9 (LCAG), Gln-74, and Gly-79. N-acetyl-alpha-D-glucosamine 1-phosphate contacts are provided by Thr-80, Gly-132, Glu-144, and Asn-158. A linker region spans residues 205–224 (GYWNDIGKPWDLLDANTHIL). The segment at 225 to 411 (KNIKTDIKGK…EEIIIKTKRK (187 aa)) is N-acetyltransferase. His-308 serves as the catalytic Proton acceptor. Acetyl-CoA is bound by residues Ala-384 and Lys-401.

This sequence in the N-terminal section; belongs to the N-acetylglucosamine-1-phosphate uridyltransferase family. It in the C-terminal section; belongs to the transferase hexapeptide repeat family.

It carries out the reaction N-acetyl-alpha-D-glucosamine 1-phosphate + UTP + H(+) = UDP-N-acetyl-alpha-D-glucosamine + diphosphate. The enzyme catalyses alpha-D-glucosamine 1-phosphate + acetyl-CoA = N-acetyl-alpha-D-glucosamine 1-phosphate + CoA + H(+). It functions in the pathway nucleotide-sugar biosynthesis; UDP-N-acetyl-alpha-D-glucosamine biosynthesis; N-acetyl-alpha-D-glucosamine 1-phosphate from alpha-D-glucosamine 6-phosphate (route II): step 2/2. The protein operates within nucleotide-sugar biosynthesis; UDP-N-acetyl-alpha-D-glucosamine biosynthesis; UDP-N-acetyl-alpha-D-glucosamine from N-acetyl-alpha-D-glucosamine 1-phosphate: step 1/1. Its function is as follows. Catalyzes the last two sequential reactions in the de novo biosynthetic pathway for UDP-N-acetyl-glucosamine (UDP-GlcNAc). Responsible for the acetylation of GlcN-1-P to GlcNAc-1-P, and for the uridyl transfer from UTP to GlcNAc-1-P, to produce UDP-GlcNAc and pyrophosphate. This is Bifunctional protein GlmU from Methanococcus aeolicus (strain ATCC BAA-1280 / DSM 17508 / OCM 812 / Nankai-3).